Consider the following 831-residue polypeptide: Translation initiation factor IF-2 (831 aa).

The 171-residue stretch at 329 to 499 (TRAPVVTVMG…LLISEMQDLK (171 aa)) folds into the tr-type G domain. The tract at residues 338-345 (GHVDHGKT) is G1. 338–345 (GHVDHGKT) contributes to the GTP binding site. Residues 363 to 367 (GITQH) are G2. Residues 385–388 (DTPG) form a G3 region. GTP is bound by residues 385–389 (DTPGH) and 439–442 (NKID). The G4 stretch occupies residues 439–442 (NKID). Residues 475 to 477 (SAL) form a G5 region.

Belongs to the TRAFAC class translation factor GTPase superfamily. Classic translation factor GTPase family. IF-2 subfamily.

It is found in the cytoplasm. Functionally, one of the essential components for the initiation of protein synthesis. Protects formylmethionyl-tRNA from spontaneous hydrolysis and promotes its binding to the 30S ribosomal subunits. Also involved in the hydrolysis of GTP during the formation of the 70S ribosomal complex. In Rickettsia prowazekii (strain Madrid E), this protein is Translation initiation factor IF-2 (infB).